Consider the following 313-residue polypeptide: Aspartate carbamoyltransferase catalytic subunit (313 aa).

The carbamoyl phosphate site is built by arginine 58 and threonine 59. Lysine 86 lines the L-aspartate pocket. Residues arginine 108, histidine 136, and glutamine 139 each contribute to the carbamoyl phosphate site. L-aspartate-binding residues include arginine 169 and arginine 223. Residues glycine 265 and proline 266 each contribute to the carbamoyl phosphate site.

It belongs to the aspartate/ornithine carbamoyltransferase superfamily. ATCase family. Heterododecamer (2C3:3R2) of six catalytic PyrB chains organized as two trimers (C3), and six regulatory PyrI chains organized as three dimers (R2).

The catalysed reaction is carbamoyl phosphate + L-aspartate = N-carbamoyl-L-aspartate + phosphate + H(+). The protein operates within pyrimidine metabolism; UMP biosynthesis via de novo pathway; (S)-dihydroorotate from bicarbonate: step 2/3. Its function is as follows. Catalyzes the condensation of carbamoyl phosphate and aspartate to form carbamoyl aspartate and inorganic phosphate, the committed step in the de novo pyrimidine nucleotide biosynthesis pathway. The sequence is that of Aspartate carbamoyltransferase catalytic subunit from Anaeromyxobacter sp. (strain K).